The following is a 673-amino-acid chain: Transcription initiation factor IIB (673 aa).

The segment at 38–69 (EEIVCPICGSKEVVKDYERAEIVCAKCGCVIK) adopts a TFIIB-type zinc-finger fold. Zn(2+) is bound by residues cysteine 42, cysteine 45, cysteine 61, and cysteine 64. The DOD-type homing endonuclease domain maps to 238-357 (ILGYIIAEGY…VIFLLLQIKE (120 aa)). Tandem repeats lie at residues 490–573 (SELD…AREL) and 584–665 (DYVP…ELTE).

Belongs to the TFIIB family. This protein undergoes a protein self splicing that involves a post-translational excision of the intervening region (intein) followed by peptide ligation.

In terms of biological role, stabilizes TBP binding to an archaeal box-A promoter. Also responsible for recruiting RNA polymerase II to the pre-initiation complex (DNA-TBP-TFIIB). This is Transcription initiation factor IIB (tfb) from Methanocaldococcus jannaschii (strain ATCC 43067 / DSM 2661 / JAL-1 / JCM 10045 / NBRC 100440) (Methanococcus jannaschii).